Consider the following 75-residue polypeptide: Small ribosomal subunit protein bS18 (75 aa).

The protein belongs to the bacterial ribosomal protein bS18 family. Part of the 30S ribosomal subunit. Forms a tight heterodimer with protein bS6.

Binds as a heterodimer with protein bS6 to the central domain of the 16S rRNA, where it helps stabilize the platform of the 30S subunit. The polypeptide is Small ribosomal subunit protein bS18 (Psychrobacter sp. (strain PRwf-1)).